The following is an 87-amino-acid chain: Small ribosomal subunit protein uS17 (87 aa).

It belongs to the universal ribosomal protein uS17 family. In terms of assembly, part of the 30S ribosomal subunit.

Its function is as follows. One of the primary rRNA binding proteins, it binds specifically to the 5'-end of 16S ribosomal RNA. This chain is Small ribosomal subunit protein uS17, found in Alcanivorax borkumensis (strain ATCC 700651 / DSM 11573 / NCIMB 13689 / SK2).